We begin with the raw amino-acid sequence, 218 residues long: Large ribosomal subunit protein uL3 (218 aa).

A disordered region spans residues 137-157 (GVGASHGAHKNHRKPGSIGGA).

This sequence belongs to the universal ribosomal protein uL3 family. As to quaternary structure, part of the 50S ribosomal subunit. Forms a cluster with proteins L14 and L19.

In terms of biological role, one of the primary rRNA binding proteins, it binds directly near the 3'-end of the 23S rRNA, where it nucleates assembly of the 50S subunit. The chain is Large ribosomal subunit protein uL3 from Kocuria rhizophila (strain ATCC 9341 / DSM 348 / NBRC 103217 / DC2201).